A 452-amino-acid polypeptide reads, in one-letter code: MRECISVHIGQAGVQMGNACWELYCLEHGIQPDGQMPSDKTIGGGDDSFNTFFSETGAGKHVPRAVFVDLEPTVVDEVRTGTYRQLFHPEQLITGKEDAANNYARGHYTVGKEIIDLVLDRIRKLADQCTGLQGFLIFHSFGGGTGSGFSSLLMERLSVDYGKKSKLEFAIYPAPQISTAVVEPYNSILTTHTTLEHSDCAFMVDNEAIYDICRRNLDIERPTYTNLNRLIGQIVSSITASLRFDGALNVDLTEFQTNLVPYPRIHFPLATYAPVISAEKAYHEQLTVAEITNACFEPANQMVKCDPRHGKYMSCCMLYRGDVVPKDVNAAIATIKTKRTIQFVDWCPTGFKVGINYQPPTVVPGGDLAKVQRAVCMLSNTTAIAEAWARLDHKFDLMYAKRAFVHWYVGEGMEEGEFSEAREDLAALEKDYEEVGVDSVEGEGEEEGGEEY.

Residue Gln-11 participates in GTP binding. N6-acetyllysine is present on Lys-40. Positions 71, 140, 144, 145, 179, 206, and 228 each coordinate GTP. Glu-71 provides a ligand contact to Mg(2+). Residue Glu-254 is part of the active site. The disordered stretch occupies residues 432–452; that stretch reads YEEVGVDSVEGEGEEEGGEEY.

It belongs to the tubulin family. As to quaternary structure, dimer of alpha and beta chains. A typical microtubule is a hollow water-filled tube with an outer diameter of 25 nm and an inner diameter of 15 nM. Alpha-beta heterodimers associate head-to-tail to form protofilaments running lengthwise along the microtubule wall with the beta-tubulin subunit facing the microtubule plus end conferring a structural polarity. Microtubules usually have 13 protofilaments but different protofilament numbers can be found in some organisms and specialized cells. Mg(2+) serves as cofactor. Undergoes a tyrosination/detyrosination cycle, the cyclic removal and re-addition of a C-terminal tyrosine residue by the enzymes tubulin tyrosine carboxypeptidase (TTCP) and tubulin tyrosine ligase (TTL), respectively. Post-translationally, acetylation of alpha chains at Lys-40 stabilizes microtubules and affects affinity and processivity of microtubule motors. This modification has a role in multiple cellular functions, ranging from cell motility, cell cycle progression or cell differentiation to intracellular trafficking and signaling.

The protein localises to the cytoplasm. The protein resides in the cytoskeleton. The enzyme catalyses GTP + H2O = GDP + phosphate + H(+). Tubulin is the major constituent of microtubules, a cylinder consisting of laterally associated linear protofilaments composed of alpha- and beta-tubulin heterodimers. Microtubules grow by the addition of GTP-tubulin dimers to the microtubule end, where a stabilizing cap forms. Below the cap, tubulin dimers are in GDP-bound state, owing to GTPase activity of alpha-tubulin. The polypeptide is Tubulin alpha-2/alpha-4 chain (TUB2) (Patella vulgata (Common limpet)).